Reading from the N-terminus, the 757-residue chain is Xaa-Pro dipeptidyl-peptidase (757 aa).

Catalysis depends on charge relay system residues S348, D468, and H498.

The protein belongs to the peptidase S15 family. In terms of assembly, homodimer.

The protein resides in the cytoplasm. The enzyme catalyses Hydrolyzes Xaa-Pro-|- bonds to release unblocked, N-terminal dipeptides from substrates including Ala-Pro-|-p-nitroanilide and (sequentially) Tyr-Pro-|-Phe-Pro-|-Gly-Pro-|-Ile.. In terms of biological role, removes N-terminal dipeptides sequentially from polypeptides having unsubstituted N-termini provided that the penultimate residue is proline. This chain is Xaa-Pro dipeptidyl-peptidase, found in Streptococcus pneumoniae (strain ATCC BAA-255 / R6).